Here is a 505-residue protein sequence, read N- to C-terminus: Circadian clock protein KaiC3 (505 aa).

2 consecutive KaiC domains span residues 10–252 (EKLE…KSSD) and 253–485 (IRIT…LAGT). Ser423 carries the post-translational modification Phosphoserine; by autocatalysis. Phosphothreonine; by autocatalysis is present on Thr424.

Belongs to the KaiC family. In terms of assembly, multimerizes, probably forming homohexamers, no interaction with KaiC1 or KaiC2 is seen. In another study forms hexamers, interacts with KaiB1, KaiB3, and KaiC1. In terms of processing, autophosphorylates and dephosphorylates. Dephosphorylation of KaiC3 was higher at 25 than at 30 or 35 degrees Celsius.

The enzyme catalyses L-seryl-[protein] + ATP = O-phospho-L-seryl-[protein] + ADP + H(+). It carries out the reaction L-threonyl-[protein] + ATP = O-phospho-L-threonyl-[protein] + ADP + H(+). The catalysed reaction is ATP + H2O = ADP + phosphate + H(+). Its activity is regulated as follows. ATPase activity is influenced by KaiB1 and KaiB3 in vitro; ATPase is reduced 35% by the KaiB1 tetramer and 55% by the KaiB3 monomer but not affected by KaiA or the KaiB3 tetramer. Seems to be linked to dark adaption of Synechocystis cells, but is not as essential as the core oscillator KaiAB1C1 for the circadian cycle. KaiB3 and KaiC3 may cross talk with the core oscillator. Autophosphorylates and dephosphorylates independently of KaiA. Has a weak ATPase, hydrolyzes 8.5 ATP/monomer/day, has no detectable ATP synthesis activity. ATPase activity reduced 55% by KaiB3 monomer but not the KaiB3 tetramer or KaiA in vitro, reduced 35% by KaiB1 tetramer. The polypeptide is Circadian clock protein KaiC3 (Synechocystis sp. (strain ATCC 27184 / PCC 6803 / Kazusa)).